Here is a 57-residue protein sequence, read N- to C-terminus: Small hydrophobic protein (57 aa).

At 1–8 (MPAIQPPL) the chain is on the virion surface side. A helical transmembrane segment spans residues 9–29 (YLTFLLLTLLYLIITLYVWTI). Residues 30 to 57 (LTINHNTAVRYAALYQRSFSRWGFDQSL) lie on the Intravirion side of the membrane.

This sequence belongs to the rubulavirus small hydrophobic protein family. As to quaternary structure, interacts with host TNFRSF1A, RIPK1 and IRAK1; these interactions interfere with host NF-kappa-B activation at the level of receptor complexes. Interacts with host protein UBQLN4.

It localises to the virion membrane. The protein localises to the host cell membrane. Plays a role in the inhibition of the host NF-kappa-B pathway. This inhibition occurs at the receptor level, by preventing the signaling of TNFR1 as well as IL-1R and TLR3. The sequence is that of Small hydrophobic protein (SH) from Mumps virus genotype A (strain Jeryl-Lynn) (MuV).